Consider the following 75-residue polypeptide: Small ribosomal subunit protein bS18 (75 aa).

Belongs to the bacterial ribosomal protein bS18 family. As to quaternary structure, part of the 30S ribosomal subunit. Forms a tight heterodimer with protein bS6.

Its function is as follows. Binds as a heterodimer with protein bS6 to the central domain of the 16S rRNA, where it helps stabilize the platform of the 30S subunit. The protein is Small ribosomal subunit protein bS18 of Aliivibrio fischeri (strain ATCC 700601 / ES114) (Vibrio fischeri).